We begin with the raw amino-acid sequence, 333 residues long: Uroporphyrinogen decarboxylase (333 aa).

Substrate is bound by residues 21 to 25 (RQVGR), Asp-70, Tyr-139, Ser-194, and His-309.

This sequence belongs to the uroporphyrinogen decarboxylase family. Homodimer.

It localises to the cytoplasm. It carries out the reaction uroporphyrinogen III + 4 H(+) = coproporphyrinogen III + 4 CO2. It functions in the pathway porphyrin-containing compound metabolism; protoporphyrin-IX biosynthesis; coproporphyrinogen-III from 5-aminolevulinate: step 4/4. Its function is as follows. Catalyzes the decarboxylation of four acetate groups of uroporphyrinogen-III to yield coproporphyrinogen-III. The polypeptide is Uroporphyrinogen decarboxylase (Chlamydia caviae (strain ATCC VR-813 / DSM 19441 / 03DC25 / GPIC) (Chlamydophila caviae)).